Here is a 473-residue protein sequence, read N- to C-terminus: Glutathione reductase, mitochondrial (473 aa).

FAD is bound by residues Ser-30 and Gly-31. Ser-30 is a binding site for glutathione. Arg-37 is a glutathione binding site. Residues Glu-50, Thr-57, Cys-58, and Lys-66 each contribute to the FAD site. Cys-58 and Cys-63 are joined by a disulfide. A glutathione-binding site is contributed by Tyr-114. Ala-130 contacts FAD. Positions 190, 193, 196, 213, 219, and 279 each coordinate NADP(+). Asp-320 is a binding site for FAD. Position 326 (Leu-326) interacts with NADP(+). Position 328 (Thr-328) interacts with FAD. A glutathione-binding site is contributed by Arg-336. Val-359 is an NADP(+) binding site. His-456 contacts FAD. The Proton acceptor role is filled by His-456.

It belongs to the class-I pyridine nucleotide-disulfide oxidoreductase family. FAD serves as cofactor. As to expression, expressed at all larval stages and in adults in intestine, vulva muscle, pharynx and some cells in the tail.

The protein resides in the cytoplasm. The protein localises to the mitochondrion. The enzyme catalyses 2 glutathione + NADP(+) = glutathione disulfide + NADPH + H(+). In terms of biological role, catalyzes the reduction of glutathione disulfide (GSSG) to reduced glutathione (GSH). Constitutes the major mechanism to maintain a high GSH:GSSG ratio in the cytosol. Involved in resistance to oxidative stress and starvation. Together with thioredoxin reductase txtr-1, required for the reduction of disulfide groups in the cuticle during molting. This chain is Glutathione reductase, mitochondrial, found in Caenorhabditis elegans.